Consider the following 447-residue polypeptide: Coagulation factor VII (447 aa).

An N-terminal signal peptide occupies residues Met-1–Ala-23. The propeptide occupies Val-24 to Arg-40. Positions Ala-41–Asn-85 constitute a Gla domain. Glu-46, Glu-47, Glu-54, Glu-56, Glu-59, Glu-60, Glu-65, Glu-66, Glu-69, Glu-74, and Glu-75 each carry 4-carboxyglutamate. A disulfide bridge links Cys-57 with Cys-62. The region spanning Asp-86–Glu-122 is the EGF-like 1; calcium-binding domain. Cystine bridges form between Cys-90-Cys-101, Cys-95-Cys-110, Cys-112-Cys-121, Cys-131-Cys-142, Cys-138-Cys-152, Cys-154-Cys-167, Cys-175-Cys-302, Cys-199-Cys-204, Cys-218-Cys-234, and Cys-350-Cys-369. An O-linked (Glc...) serine glycan is attached at Ser-92. A glycan (O-linked (Glc...) serine; alternate) is linked at Ser-92. The O-linked (Xyl...) serine; alternate glycan is linked to Ser-92. Ser-100 carries an O-linked (Fuc) serine glycan. Positions Ser-127–Ala-168 constitute an EGF-like 2 domain. N-linked (GlcNAc...) asparagine glycosylation is present at Asn-185. In terms of domain architecture, Peptidase S1 spans Ile-193–Gly-432. His-233 functions as the Charge relay system in the catalytic mechanism. Asn-243 is a glycosylation site (N-linked (GlcNAc...) asparagine). The active-site Charge relay system is Asp-282. Asp-378 contacts substrate. A disulfide bridge connects residues Cys-380 and Cys-408. Catalysis depends on Ser-384, which acts as the Charge relay system.

It belongs to the peptidase S1 family. In terms of assembly, heterodimer of a light chain and a heavy chain linked by a disulfide bond. Post-translationally, the vitamin K-dependent, enzymatic carboxylation of some glutamate residues allows the modified protein to bind calcium. In terms of processing, O-glycosylated. O-fucosylated by POFUT1 on a conserved serine or threonine residue found in the consensus sequence C2-X(4,5)-[S/T]-C3 of EGF domains, where C2 and C3 are the second and third conserved cysteines. Can be either O-glucosylated or O-xylosylated at Ser-92 by POGLUT1. In terms of tissue distribution, plasma.

It localises to the secreted. The enzyme catalyses Selective cleavage of Arg-|-Ile bond in factor X to form factor Xa.. Initiates the extrinsic pathway of blood coagulation. Serine protease that circulates in the blood in a zymogen form. Factor VII is converted to factor VIIa by factor Xa, factor XIIa, factor IXa, or thrombin by minor proteolysis. In the presence of tissue factor and calcium ions, factor VIIa then converts factor X to factor Xa by limited proteolysis. Factor VIIa also converts factor IX to factor IXa in the presence of tissue factor and calcium. The protein is Coagulation factor VII (F7) of Bos taurus (Bovine).